The chain runs to 276 residues: Phosphatidylglycerol--prolipoprotein diacylglyceryl transferase (276 aa).

3 helical membrane-spanning segments follow: residues L17 to A37, I63 to Y83, and I95 to S115. R146 serves as a coordination point for a 1,2-diacyl-sn-glycero-3-phospho-(1'-sn-glycerol). A run of 3 helical transmembrane segments spans residues S182–A202, G209–F229, and F235–V255.

The protein belongs to the Lgt family.

It is found in the cell inner membrane. The enzyme catalyses L-cysteinyl-[prolipoprotein] + a 1,2-diacyl-sn-glycero-3-phospho-(1'-sn-glycerol) = an S-1,2-diacyl-sn-glyceryl-L-cysteinyl-[prolipoprotein] + sn-glycerol 1-phosphate + H(+). It functions in the pathway protein modification; lipoprotein biosynthesis (diacylglyceryl transfer). Catalyzes the transfer of the diacylglyceryl group from phosphatidylglycerol to the sulfhydryl group of the N-terminal cysteine of a prolipoprotein, the first step in the formation of mature lipoproteins. The sequence is that of Phosphatidylglycerol--prolipoprotein diacylglyceryl transferase from Polaromonas sp. (strain JS666 / ATCC BAA-500).